The primary structure comprises 203 residues: Ribosome maturation factor RimP (203 aa).

Residues 179 to 203 are disordered; it reads VSSEGEDGGEARQAPKLNPKKPGKK.

The protein belongs to the RimP family.

Its subcellular location is the cytoplasm. In terms of biological role, required for maturation of 30S ribosomal subunits. This chain is Ribosome maturation factor RimP, found in Gluconobacter oxydans (strain 621H) (Gluconobacter suboxydans).